Here is a 283-residue protein sequence, read N- to C-terminus: Elongation factor Ts (283 aa).

Residues 80–83 (TDFV) form an involved in Mg(2+) ion dislocation from EF-Tu region.

This sequence belongs to the EF-Ts family.

It is found in the cytoplasm. Associates with the EF-Tu.GDP complex and induces the exchange of GDP to GTP. It remains bound to the aminoacyl-tRNA.EF-Tu.GTP complex up to the GTP hydrolysis stage on the ribosome. This chain is Elongation factor Ts, found in Klebsiella pneumoniae (strain 342).